Here is a 424-residue protein sequence, read N- to C-terminus: Enolase (424 aa).

(2R)-2-phosphoglycerate is bound at residue glutamine 162. Residue glutamate 204 is the Proton donor of the active site. Mg(2+) contacts are provided by aspartate 241, glutamate 284, and aspartate 311. Lysine 336, arginine 365, serine 366, and lysine 387 together coordinate (2R)-2-phosphoglycerate. Residue lysine 336 is the Proton acceptor of the active site.

It belongs to the enolase family. Mg(2+) is required as a cofactor.

It localises to the cytoplasm. Its subcellular location is the secreted. It is found in the cell surface. The catalysed reaction is (2R)-2-phosphoglycerate = phosphoenolpyruvate + H2O. It functions in the pathway carbohydrate degradation; glycolysis; pyruvate from D-glyceraldehyde 3-phosphate: step 4/5. Its function is as follows. Catalyzes the reversible conversion of 2-phosphoglycerate (2-PG) into phosphoenolpyruvate (PEP). It is essential for the degradation of carbohydrates via glycolysis. This Sinorhizobium medicae (strain WSM419) (Ensifer medicae) protein is Enolase.